Consider the following 182-residue polypeptide: Isopentenyl-diphosphate Delta-isomerase (182 aa).

Mn(2+)-binding residues include H25 and H32. The region spanning 30–164 is the Nudix hydrolase domain; it reads LLHLAFSSWL…PWAFSPWMVM (135 aa). Residue C67 is part of the active site. H69 provides a ligand contact to Mn(2+). E87 provides a ligand contact to Mg(2+). E114 and E116 together coordinate Mn(2+). The active site involves E116.

It belongs to the IPP isomerase type 1 family. As to quaternary structure, homodimer. Mg(2+) is required as a cofactor. Mn(2+) serves as cofactor.

Its subcellular location is the cytoplasm. It carries out the reaction isopentenyl diphosphate = dimethylallyl diphosphate. It functions in the pathway isoprenoid biosynthesis; dimethylallyl diphosphate biosynthesis; dimethylallyl diphosphate from isopentenyl diphosphate: step 1/1. Catalyzes the 1,3-allylic rearrangement of the homoallylic substrate isopentenyl (IPP) to its highly electrophilic allylic isomer, dimethylallyl diphosphate (DMAPP). The chain is Isopentenyl-diphosphate Delta-isomerase from Shigella flexneri serotype 5b (strain 8401).